A 264-amino-acid chain; its full sequence is Thymidylate synthase (264 aa).

Residue R21 coordinates dUMP. A (6R)-5,10-methylene-5,6,7,8-tetrahydrofolate-binding site is contributed by H51. Position 126–127 (126–127) interacts with dUMP; it reads RR. C146 functions as the Nucleophile in the catalytic mechanism. Residues 166–169, N177, and 207–209 each bind dUMP; these read RSAD and HLY. Residue D169 participates in (6R)-5,10-methylene-5,6,7,8-tetrahydrofolate binding. Position 263 (A263) interacts with (6R)-5,10-methylene-5,6,7,8-tetrahydrofolate.

This sequence belongs to the thymidylate synthase family. Bacterial-type ThyA subfamily. As to quaternary structure, homodimer.

Its subcellular location is the cytoplasm. The catalysed reaction is dUMP + (6R)-5,10-methylene-5,6,7,8-tetrahydrofolate = 7,8-dihydrofolate + dTMP. It functions in the pathway pyrimidine metabolism; dTTP biosynthesis. Its function is as follows. Catalyzes the reductive methylation of 2'-deoxyuridine-5'-monophosphate (dUMP) to 2'-deoxythymidine-5'-monophosphate (dTMP) while utilizing 5,10-methylenetetrahydrofolate (mTHF) as the methyl donor and reductant in the reaction, yielding dihydrofolate (DHF) as a by-product. This enzymatic reaction provides an intracellular de novo source of dTMP, an essential precursor for DNA biosynthesis. The protein is Thymidylate synthase of Cytophaga hutchinsonii (strain ATCC 33406 / DSM 1761 / CIP 103989 / NBRC 15051 / NCIMB 9469 / D465).